The primary structure comprises 380 residues: Cytochrome b (380 aa).

4 helical membrane-spanning segments follow: residues 33–53, 77–98, 113–133, and 178–198; these read FGSLLGLCLIAQILTGLFLAM, WLIRNLHANGASFFFICLYLHV, WNIGVVLLLLVMMTAFVGYVL, and FFAFHFLFPFIIAAMVLLHLL. 2 residues coordinate heme b: His-83 and His-97. Residues His-182 and His-196 each contribute to the heme b site. His-201 serves as a coordination point for a ubiquinone. 4 consecutive transmembrane segments (helical) span residues 226 to 246, 288 to 308, 320 to 340, and 347 to 367; these read YKDLFGFVILLLALSILTLFS, LGGVLALLASILILMVVPLLH, LTQILFWTLVADVAILTWIGG, and FITVGQVASVLYFALFLILIP.

The protein belongs to the cytochrome b family. As to quaternary structure, the cytochrome bc1 complex contains 3 respiratory subunits (MT-CYB, CYC1 and UQCRFS1), 2 core proteins (UQCRC1 and UQCRC2) and probably 6 low-molecular weight proteins. It depends on heme b as a cofactor.

It is found in the mitochondrion inner membrane. Functionally, component of the ubiquinol-cytochrome c reductase complex (complex III or cytochrome b-c1 complex) that is part of the mitochondrial respiratory chain. The b-c1 complex mediates electron transfer from ubiquinol to cytochrome c. Contributes to the generation of a proton gradient across the mitochondrial membrane that is then used for ATP synthesis. This chain is Cytochrome b (mt-cyb), found in Allocyttus niger (Black oreo dory).